A 267-amino-acid chain; its full sequence is Carboxy-S-adenosyl-L-methionine synthase (267 aa).

A compositionally biased stretch (polar residues) spans M1 to D11. Residues M1–D25 form a disordered region. Residues T12–R24 are compositionally biased toward basic and acidic residues. S-adenosyl-L-methionine is bound by residues Y59, G84–S86, D109–N110, D137–I138, N152, and R219.

The protein belongs to the class I-like SAM-binding methyltransferase superfamily. Cx-SAM synthase family. In terms of assembly, homodimer.

It carries out the reaction prephenate + S-adenosyl-L-methionine = carboxy-S-adenosyl-L-methionine + 3-phenylpyruvate + H2O. Functionally, catalyzes the conversion of S-adenosyl-L-methionine (SAM) to carboxy-S-adenosyl-L-methionine (Cx-SAM). The protein is Carboxy-S-adenosyl-L-methionine synthase of Yersinia pseudotuberculosis serotype O:1b (strain IP 31758).